We begin with the raw amino-acid sequence, 360 residues long: Phospho-N-acetylmuramoyl-pentapeptide-transferase (360 aa).

Transmembrane regions (helical) follow at residues 21-41, 74-94, 97-117, 135-155, 168-188, 199-219, 236-256, 263-283, 288-308, and 338-358; these read YVTFRAILGLMTALVFCLWWG, MGGILILAGIFISVLLWGDLG, YVWVVLFVLASFGLIGFIDDY, ILQSLAAIIIAFYLYASADTV, IMPQMGAFFIVLAYFTIVGSS, GLAIMPTVMVAAAFALIAYLS, AGELVIVCTAIVGAGLGFLWF, VFMGDVGSLALGAALGAIAVL, ILLVIMGGVFVMETVSVILQV, and VIVRFWIISLFLVMLGLATLK.

This sequence belongs to the glycosyltransferase 4 family. MraY subfamily. The cofactor is Mg(2+).

The protein localises to the cell inner membrane. The enzyme catalyses UDP-N-acetyl-alpha-D-muramoyl-L-alanyl-gamma-D-glutamyl-meso-2,6-diaminopimeloyl-D-alanyl-D-alanine + di-trans,octa-cis-undecaprenyl phosphate = di-trans,octa-cis-undecaprenyl diphospho-N-acetyl-alpha-D-muramoyl-L-alanyl-D-glutamyl-meso-2,6-diaminopimeloyl-D-alanyl-D-alanine + UMP. Its pathway is cell wall biogenesis; peptidoglycan biosynthesis. Catalyzes the initial step of the lipid cycle reactions in the biosynthesis of the cell wall peptidoglycan: transfers peptidoglycan precursor phospho-MurNAc-pentapeptide from UDP-MurNAc-pentapeptide onto the lipid carrier undecaprenyl phosphate, yielding undecaprenyl-pyrophosphoryl-MurNAc-pentapeptide, known as lipid I. This Shewanella violacea (strain JCM 10179 / CIP 106290 / LMG 19151 / DSS12) protein is Phospho-N-acetylmuramoyl-pentapeptide-transferase.